The chain runs to 247 residues: tRNA pseudouridine synthase A (247 aa).

The Nucleophile role is filled by D53. Y111 contributes to the substrate binding site.

This sequence belongs to the tRNA pseudouridine synthase TruA family. Homodimer.

It carries out the reaction uridine(38/39/40) in tRNA = pseudouridine(38/39/40) in tRNA. In terms of biological role, formation of pseudouridine at positions 38, 39 and 40 in the anticodon stem and loop of transfer RNAs. The chain is tRNA pseudouridine synthase A from Bacillus licheniformis (strain ATCC 14580 / DSM 13 / JCM 2505 / CCUG 7422 / NBRC 12200 / NCIMB 9375 / NCTC 10341 / NRRL NRS-1264 / Gibson 46).